We begin with the raw amino-acid sequence, 111 residues long: MDLKDGVEEEEGAGENGKGGTHAQRVSDTHLRCLPFLARKERETNFDTSMLSAGMNQLLDLEDYMFQRIQGPEEPSAETSVGGFCDDRLCQYGNMFSGYGACGTYFAPEAP.

The tract at residues 1–26 (MDLKDGVEEEEGAGENGKGGTHAQRV) is disordered.

This is an uncharacterized protein from Caenorhabditis elegans.